We begin with the raw amino-acid sequence, 343 residues long: Phenylalanine--tRNA ligase alpha subunit (343 aa).

E268 serves as a coordination point for Mg(2+).

The protein belongs to the class-II aminoacyl-tRNA synthetase family. Phe-tRNA synthetase alpha subunit type 1 subfamily. As to quaternary structure, tetramer of two alpha and two beta subunits. The cofactor is Mg(2+).

Its subcellular location is the cytoplasm. The enzyme catalyses tRNA(Phe) + L-phenylalanine + ATP = L-phenylalanyl-tRNA(Phe) + AMP + diphosphate + H(+). This chain is Phenylalanine--tRNA ligase alpha subunit, found in Cupriavidus necator (strain ATCC 17699 / DSM 428 / KCTC 22496 / NCIMB 10442 / H16 / Stanier 337) (Ralstonia eutropha).